Consider the following 406-residue polypeptide: Argininosuccinate synthase (406 aa).

ATP is bound by residues Ala-13–Ser-21 and Ala-40. Positions 91 and 96 each coordinate L-citrulline. An ATP-binding site is contributed by Gly-121. Residues Thr-123, Asn-127, and Asp-128 each contribute to the L-aspartate site. Asn-127 is an L-citrulline binding site. Arg-131, Ser-182, Ser-191, Glu-267, and Tyr-279 together coordinate L-citrulline.

It belongs to the argininosuccinate synthase family. Type 1 subfamily. In terms of assembly, homotetramer.

The protein resides in the cytoplasm. It catalyses the reaction L-citrulline + L-aspartate + ATP = 2-(N(omega)-L-arginino)succinate + AMP + diphosphate + H(+). Its pathway is amino-acid biosynthesis; L-arginine biosynthesis; L-arginine from L-ornithine and carbamoyl phosphate: step 2/3. In Brucella anthropi (strain ATCC 49188 / DSM 6882 / CCUG 24695 / JCM 21032 / LMG 3331 / NBRC 15819 / NCTC 12168 / Alc 37) (Ochrobactrum anthropi), this protein is Argininosuccinate synthase.